The primary structure comprises 118 residues: Large ribosomal subunit protein bL20 (118 aa).

This sequence belongs to the bacterial ribosomal protein bL20 family.

Binds directly to 23S ribosomal RNA and is necessary for the in vitro assembly process of the 50S ribosomal subunit. It is not involved in the protein synthesizing functions of that subunit. This Phenylobacterium zucineum (strain HLK1) protein is Large ribosomal subunit protein bL20.